Here is an 81-residue protein sequence, read N- to C-terminus: Protein L83L (81 aa).

The tract at residues 1-28 is disordered; sequence MDTSLKNNDGALDADNKNYQDYKDEPDK. Residues 14-28 show a composition bias toward basic and acidic residues; sequence ADNKNYQDYKDEPDK.

Belongs to the asfivirus L83L family. As to quaternary structure, interacts with host IL1B.

The protein localises to the host cytoplasm. May subvert the host innate immune response by interacting with host IL1B and interfering with its function. The protein is Protein L83L of African swine fever virus (isolate Tick/South Africa/Pretoriuskop Pr4/1996) (ASFV).